A 231-amino-acid polypeptide reads, in one-letter code: Ribose-5-phosphate isomerase A (231 aa).

Residues 28-31 (TGST), 83-86 (DGAD), and 96-99 (KGGG) each bind substrate. Glutamate 105 acts as the Proton acceptor in catalysis. Lysine 123 is a substrate binding site.

It belongs to the ribose 5-phosphate isomerase family. As to quaternary structure, homodimer.

The catalysed reaction is aldehydo-D-ribose 5-phosphate = D-ribulose 5-phosphate. The protein operates within carbohydrate degradation; pentose phosphate pathway; D-ribose 5-phosphate from D-ribulose 5-phosphate (non-oxidative stage): step 1/1. In terms of biological role, catalyzes the reversible conversion of ribose-5-phosphate to ribulose 5-phosphate. This chain is Ribose-5-phosphate isomerase A, found in Sinorhizobium fredii (strain NBRC 101917 / NGR234).